A 173-amino-acid chain; its full sequence is Superoxide dismutase [Cu-Zn] (173 aa).

The signal sequence occupies residues 1-19; that stretch reads MKRFSLAILALVVATGAQA. Residues H67, H69, and H92 each contribute to the Cu cation site. Positions 72–113 are disordered; the sequence is GSCQPATKDGKASAAESAGGHLDPQNTGKHEGPEGAGHLGDL. Cysteines 74 and 169 form a disulfide. Positions 92, 101, 109, and 112 each coordinate Zn(2+). H147 provides a ligand contact to Cu cation.

The protein belongs to the Cu-Zn superoxide dismutase family. As to quaternary structure, monomer. Cu cation serves as cofactor. It depends on Zn(2+) as a cofactor.

It localises to the periplasm. The enzyme catalyses 2 superoxide + 2 H(+) = H2O2 + O2. Destroys radicals which are normally produced within the cells and which are toxic to biological systems. The sequence is that of Superoxide dismutase [Cu-Zn] (sodC) from Escherichia coli O157:H7.